A 122-amino-acid polypeptide reads, in one-letter code: Large ribosomal subunit protein uL14 (122 aa).

Belongs to the universal ribosomal protein uL14 family. In terms of assembly, part of the 50S ribosomal subunit. Forms a cluster with proteins L3 and L19. In the 70S ribosome, L14 and L19 interact and together make contacts with the 16S rRNA in bridges B5 and B8.

In terms of biological role, binds to 23S rRNA. Forms part of two intersubunit bridges in the 70S ribosome. This is Large ribosomal subunit protein uL14 from Caldicellulosiruptor bescii (strain ATCC BAA-1888 / DSM 6725 / KCTC 15123 / Z-1320) (Anaerocellum thermophilum).